A 350-amino-acid chain; its full sequence is Twinfilin-1 (350 aa).

Serine 2 carries the N-acetylserine modification. Residues 2 to 139 (SHRTGIQASE…SLHGYKKYLL (138 aa)) enclose the ADF-H 1 domain. Phosphoserine is present on residues serine 143 and serine 277. An ADF-H 2 domain is found at 175-313 (LQGVAFPISR…TADFLYEEVH (139 aa)). Residue tyrosine 309 is modified to Phosphotyrosine. The tract at residues 316–350 (QHAHKQSFAKPKGPAGKRGIRRLIRGPAETEATTD) is disordered. Threonine 349 carries the phosphothreonine modification.

It belongs to the actin-binding proteins ADF family. Twinfilin subfamily. As to quaternary structure, interacts with G-actin; ADP-actin form and capping protein (CP). May also be able to interact with TWF2 and phosphoinositides, PI(4,5)P2. When bound to PI(4,5)P2, it is down-regulated. Interacts with ACTG1. Phosphorylated on serine and threonine residues.

Its subcellular location is the cytoplasm. The protein resides in the cytoskeleton. In terms of biological role, actin-binding protein involved in motile and morphological processes. Inhibits actin polymerization, likely by sequestering G-actin. By capping the barbed ends of filaments, it also regulates motility. Seems to play an important role in clathrin-mediated endocytosis and distribution of endocytic organelles. The polypeptide is Twinfilin-1 (TWF1) (Pongo abelii (Sumatran orangutan)).